The primary structure comprises 135 residues: MTYAIIETGGKQIRVEPGRFYDIELLPTEPDEKVTIDSVLLVQHDGAVSIGQPLVTGATVEGTVMRHYRGRKVLVYKMKPKKKTRKKRGHRQEITRLMIDSITLNGEVFVAQGEAEKETPVLDETPAEEVETAAE.

The interval 114-135 is disordered; that stretch reads EAEKETPVLDETPAEEVETAAE. Over residues 125 to 135 the composition is skewed to acidic residues; it reads TPAEEVETAAE.

Belongs to the bacterial ribosomal protein bL21 family. Part of the 50S ribosomal subunit. Contacts protein L20.

This protein binds to 23S rRNA in the presence of protein L20. In Nostoc punctiforme (strain ATCC 29133 / PCC 73102), this protein is Large ribosomal subunit protein bL21.